A 346-amino-acid polypeptide reads, in one-letter code: N-acetyl-gamma-glutamyl-phosphate reductase (346 aa).

C154 is a catalytic residue.

This sequence belongs to the NAGSA dehydrogenase family. Type 1 subfamily.

Its subcellular location is the cytoplasm. It catalyses the reaction N-acetyl-L-glutamate 5-semialdehyde + phosphate + NADP(+) = N-acetyl-L-glutamyl 5-phosphate + NADPH + H(+). It functions in the pathway amino-acid biosynthesis; L-arginine biosynthesis; N(2)-acetyl-L-ornithine from L-glutamate: step 3/4. Catalyzes the NADPH-dependent reduction of N-acetyl-5-glutamyl phosphate to yield N-acetyl-L-glutamate 5-semialdehyde. The sequence is that of N-acetyl-gamma-glutamyl-phosphate reductase from Rhodopirellula baltica (strain DSM 10527 / NCIMB 13988 / SH1).